Reading from the N-terminus, the 245-residue chain is NAD(P)H-hydrate epimerase (245 aa).

Residues 21-221 (MREIDRLAVQ…DLGIPPAVYT (201 aa)) form the YjeF N-terminal domain. 72–76 (GNGGG) contributes to the (6S)-NADPHX binding site. Residues asparagine 73 and aspartate 135 each coordinate K(+). (6S)-NADPHX is bound by residues 139–145 (GYSLLGA) and aspartate 168. Serine 171 lines the K(+) pocket.

The protein belongs to the NnrE/AIBP family. The cofactor is K(+).

The enzyme catalyses (6R)-NADHX = (6S)-NADHX. It carries out the reaction (6R)-NADPHX = (6S)-NADPHX. In terms of biological role, catalyzes the epimerization of the S- and R-forms of NAD(P)HX, a damaged form of NAD(P)H that is a result of enzymatic or heat-dependent hydration. This is a prerequisite for the S-specific NAD(P)H-hydrate dehydratase to allow the repair of both epimers of NAD(P)HX. This is NAD(P)H-hydrate epimerase from Dehalogenimonas lykanthroporepellens (strain ATCC BAA-1523 / JCM 15061 / BL-DC-9).